A 1275-amino-acid chain; its full sequence is Probable Rho-type GTPase-activating protein 2 (1275 aa).

4 disordered regions span residues 118–146 (KYESTDSFPSSQPSRANSPQSDSYSSPYE), 213–238 (NTKRSHRSSEEPGASSPVTSPILKDS), 280–306 (SSFRRPITKPTPFNSDSNISIDPKDNN), and 335–365 (SSPRRKSISIVKPHGISSPKHSTNNLSSKSG). Residues 122-143 (TDSFPSSQPSRANSPQSDSYSS) show a composition bias toward polar residues. Composition is skewed to polar residues over residues 290-299 (TPFNSDSNIS) and 353-364 (PKHSTNNLSSKS). The residue at position 388 (serine 388) is a Phosphoserine. Disordered stretches follow at residues 390–466 (IIEN…RSSF) and 539–561 (FSKSKSHNHHPSSQVEKSTSNSK). Composition is skewed to polar residues over residues 450-466 (SLSLQKTGSSDTRRSSF) and 552-561 (QVEKSTSNSK). The PH domain occupies 719–836 (HAQKEGVLLK…WLRAILRQVP (118 aa)). The span at 957 to 971 (ADTRRNQDAPEKHVP) shows a compositional bias: basic and acidic residues. Disordered stretches follow at residues 957-988 (ADTRRNQDAPEKHVPVIEIQSSRPSLEKTDQS) and 1254-1275 (NGAQNESDSDVSDDNGEDNEFF). A Rho-GAP domain is found at 1065–1275 (LPLNEAVNIS…DDNGEDNEFF (211 aa)). Over residues 1260-1275 (SDSDVSDDNGEDNEFF) the composition is skewed to acidic residues.

Its subcellular location is the nucleus. Functionally, GTPase-activating protein for Rho-type proteins. The protein is Probable Rho-type GTPase-activating protein 2 (rga2) of Schizosaccharomyces pombe (strain 972 / ATCC 24843) (Fission yeast).